The chain runs to 506 residues: ATP synthase subunit alpha (506 aa).

An ATP-binding site is contributed by 169 to 176 (GDRGTGKT).

Belongs to the ATPase alpha/beta chains family. As to quaternary structure, F-type ATPases have 2 components, CF(1) - the catalytic core - and CF(0) - the membrane proton channel. CF(1) has five subunits: alpha(3), beta(3), gamma(1), delta(1), epsilon(1). CF(0) has three main subunits: a(1), b(2) and c(9-12). The alpha and beta chains form an alternating ring which encloses part of the gamma chain. CF(1) is attached to CF(0) by a central stalk formed by the gamma and epsilon chains, while a peripheral stalk is formed by the delta and b chains.

Its subcellular location is the cell membrane. The enzyme catalyses ATP + H2O + 4 H(+)(in) = ADP + phosphate + 5 H(+)(out). In terms of biological role, produces ATP from ADP in the presence of a proton gradient across the membrane. The alpha chain is a regulatory subunit. This chain is ATP synthase subunit alpha, found in Symbiobacterium thermophilum (strain DSM 24528 / JCM 14929 / IAM 14863 / T).